A 409-amino-acid chain; its full sequence is Elongation factor Tu, chloroplastic (409 aa).

In terms of domain architecture, tr-type G spans Lys10 to Glu214. The segment at Gly19 to Thr26 is G1. Gly19–Thr26 serves as a coordination point for GTP. Mg(2+) is bound at residue Thr26. Residues Gly60–Asn64 form a G2 region. The G3 stretch occupies residues Asp81–Gly84. GTP is bound by residues Asp81–His85 and Asn136–Asp139. A G4 region spans residues Asn136–Asp139. The interval Ser174 to Leu176 is G5.

This sequence belongs to the TRAFAC class translation factor GTPase superfamily. Classic translation factor GTPase family. EF-Tu/EF-1A subfamily.

It is found in the plastid. It localises to the chloroplast. The enzyme catalyses GTP + H2O = GDP + phosphate + H(+). In terms of biological role, GTP hydrolase that promotes the GTP-dependent binding of aminoacyl-tRNA to the A-site of ribosomes during protein biosynthesis. In Thalassiosira pseudonana (Marine diatom), this protein is Elongation factor Tu, chloroplastic (tufA).